The following is a 750-amino-acid chain: Photosystem I P700 chlorophyll a apoprotein A1 (750 aa).

8 consecutive transmembrane segments (helical) span residues 70–93, 156–179, 195–219, 291–309, 346–369, 385–411, 433–455, and 531–549; these read VFSA…FHGA, LYCT…FHYH, LNHH…HVSL, IAHH…GHMY, WHAQ…HHMY, LSLF…IFMV, AIIS…LYIH, and FLVH…LILL. Residues Cys-573 and Cys-582 each coordinate [4Fe-4S] cluster. The next 2 helical transmembrane spans lie at 589–610 and 664–686; these read HVFL…HFSW and LSAY…MFLF. His-675 serves as a coordination point for chlorophyll a'. Chlorophyll a-binding residues include Met-683 and Tyr-691. A phylloquinone-binding site is contributed by Trp-692. Residues 724-744 form a helical membrane-spanning segment; sequence AVGVTHYLLGGIATTWAFFLA.

Belongs to the PsaA/PsaB family. In terms of assembly, the PsaA/B heterodimer binds the P700 chlorophyll special pair and subsequent electron acceptors. PSI consists of a core antenna complex that captures photons, and an electron transfer chain that converts photonic excitation into a charge separation. The eukaryotic PSI reaction center is composed of at least 11 subunits. Requires P700 is a chlorophyll a/chlorophyll a' dimer, A0 is one or more chlorophyll a, A1 is one or both phylloquinones and FX is a shared 4Fe-4S iron-sulfur center. as cofactor.

The protein resides in the plastid. It is found in the chloroplast thylakoid membrane. It catalyses the reaction reduced [plastocyanin] + hnu + oxidized [2Fe-2S]-[ferredoxin] = oxidized [plastocyanin] + reduced [2Fe-2S]-[ferredoxin]. In terms of biological role, psaA and PsaB bind P700, the primary electron donor of photosystem I (PSI), as well as the electron acceptors A0, A1 and FX. PSI is a plastocyanin-ferredoxin oxidoreductase, converting photonic excitation into a charge separation, which transfers an electron from the donor P700 chlorophyll pair to the spectroscopically characterized acceptors A0, A1, FX, FA and FB in turn. Oxidized P700 is reduced on the lumenal side of the thylakoid membrane by plastocyanin. In Aethionema grandiflorum (Persian stone-cress), this protein is Photosystem I P700 chlorophyll a apoprotein A1.